The primary structure comprises 426 residues: Zinc finger protein 662 (426 aa).

The region spanning 1-44 is the KRAB domain; it reads MLENYGAVASLAAFPFPKPALISQLERGETPWCSVPRGALDGEA. 8 consecutive C2H2-type zinc fingers follow at residues 192 to 214, 220 to 242, 248 to 270, 276 to 298, 304 to 326, 332 to 354, 360 to 382, and 388 to 410; these read YICE…QKTH, YGCK…QRIH, YECQ…QRIH, FECK…QRIH, YTCK…QRMH, YECK…QRVH, HECT…QRIH, and YKCN…QRRH.

The protein belongs to the krueppel C2H2-type zinc-finger protein family.

It is found in the nucleus. Functionally, may be involved in transcriptional regulation. This is Zinc finger protein 662 (ZNF662) from Homo sapiens (Human).